The following is a 197-amino-acid chain: Imidazoleglycerol-phosphate dehydratase (197 aa).

This sequence belongs to the imidazoleglycerol-phosphate dehydratase family.

Its subcellular location is the cytoplasm. It carries out the reaction D-erythro-1-(imidazol-4-yl)glycerol 3-phosphate = 3-(imidazol-4-yl)-2-oxopropyl phosphate + H2O. Its pathway is amino-acid biosynthesis; L-histidine biosynthesis; L-histidine from 5-phospho-alpha-D-ribose 1-diphosphate: step 6/9. The chain is Imidazoleglycerol-phosphate dehydratase from Syntrophobacter fumaroxidans (strain DSM 10017 / MPOB).